Consider the following 145-residue polypeptide: D-aminoacyl-tRNA deacylase (145 aa).

The Gly-cisPro motif, important for rejection of L-amino acids motif lies at 137–138 (GP).

This sequence belongs to the DTD family. As to quaternary structure, homodimer.

The protein resides in the cytoplasm. The catalysed reaction is glycyl-tRNA(Ala) + H2O = tRNA(Ala) + glycine + H(+). It carries out the reaction a D-aminoacyl-tRNA + H2O = a tRNA + a D-alpha-amino acid + H(+). Functionally, an aminoacyl-tRNA editing enzyme that deacylates mischarged D-aminoacyl-tRNAs. Also deacylates mischarged glycyl-tRNA(Ala), protecting cells against glycine mischarging by AlaRS. Acts via tRNA-based rather than protein-based catalysis; rejects L-amino acids rather than detecting D-amino acids in the active site. By recycling D-aminoacyl-tRNA to D-amino acids and free tRNA molecules, this enzyme counteracts the toxicity associated with the formation of D-aminoacyl-tRNA entities in vivo and helps enforce protein L-homochirality. The chain is D-aminoacyl-tRNA deacylase from Rhodopirellula baltica (strain DSM 10527 / NCIMB 13988 / SH1).